The sequence spans 312 residues: Protoheme IX farnesyltransferase 2 (312 aa).

Helical transmembrane passes span V31–H51, P52–L72, A119–I139, I152–G172, L179–F199, I225–F245, W247–V267, and L283–V303.

It belongs to the UbiA prenyltransferase family. Protoheme IX farnesyltransferase subfamily.

Its subcellular location is the cell inner membrane. It catalyses the reaction heme b + (2E,6E)-farnesyl diphosphate + H2O = Fe(II)-heme o + diphosphate. Its pathway is porphyrin-containing compound metabolism; heme O biosynthesis; heme O from protoheme: step 1/1. Functionally, converts heme B (protoheme IX) to heme O by substitution of the vinyl group on carbon 2 of heme B porphyrin ring with a hydroxyethyl farnesyl side group. This is Protoheme IX farnesyltransferase 2 from Nitrobacter winogradskyi (strain ATCC 25391 / DSM 10237 / CIP 104748 / NCIMB 11846 / Nb-255).